We begin with the raw amino-acid sequence, 116 residues long: Iron-sulfur cluster insertion protein ErpA (116 aa).

Iron-sulfur cluster-binding residues include Cys-44, Cys-108, and Cys-110.

Belongs to the HesB/IscA family. As to quaternary structure, homodimer. It depends on iron-sulfur cluster as a cofactor.

Its function is as follows. Required for insertion of 4Fe-4S clusters for at least IspG. In Shewanella loihica (strain ATCC BAA-1088 / PV-4), this protein is Iron-sulfur cluster insertion protein ErpA.